Reading from the N-terminus, the 78-residue chain is Large ribosomal subunit protein bL28 (78 aa).

The disordered stretch occupies residues 1-31 (MAAHCQVTGAEPGFGHSISHSHRRNKRRFDP).

The protein belongs to the bacterial ribosomal protein bL28 family.

This Pseudarthrobacter chlorophenolicus (strain ATCC 700700 / DSM 12829 / CIP 107037 / JCM 12360 / KCTC 9906 / NCIMB 13794 / A6) (Arthrobacter chlorophenolicus) protein is Large ribosomal subunit protein bL28.